A 782-amino-acid chain; its full sequence is E3 ubiquitin-protein ligase SopA (782 aa).

The interval 140-170 (SANNRPTVSEGRTPPVSPSLSLQATSSPSSP) is disordered. Over residues 157 to 170 (PSLSLQATSSPSSP) the composition is skewed to low complexity. Cys753 (glycyl thioester intermediate) is an active-site residue.

This sequence belongs to the SopA E3 ligase family. In terms of processing, ubiquitinated in the presence of host E1 ubiquitin-activating enzyme, E2 ubiquitin-conjugating enzyme and ubiquitin.

It localises to the secreted. The protein localises to the host cell. It carries out the reaction S-ubiquitinyl-[E2 ubiquitin-conjugating enzyme]-L-cysteine + [acceptor protein]-L-lysine = [E2 ubiquitin-conjugating enzyme]-L-cysteine + N(6)-ubiquitinyl-[acceptor protein]-L-lysine.. Its function is as follows. Effector proteins function to alter host cell physiology and promote bacterial survival in host tissues. This protein is an E3 ubiquitin ligase that interferes with host's ubiquitination pathway. This is E3 ubiquitin-protein ligase SopA (sopA) from Salmonella agona (strain SL483).